The chain runs to 103 residues: Co-chaperonin GroES (103 aa).

The protein belongs to the GroES chaperonin family. Heptamer of 7 subunits arranged in a ring. Interacts with the chaperonin GroEL.

It localises to the cytoplasm. Functionally, together with the chaperonin GroEL, plays an essential role in assisting protein folding. The GroEL-GroES system forms a nano-cage that allows encapsulation of the non-native substrate proteins and provides a physical environment optimized to promote and accelerate protein folding. GroES binds to the apical surface of the GroEL ring, thereby capping the opening of the GroEL channel. This is Co-chaperonin GroES from Synechococcus sp. (strain JA-2-3B'a(2-13)) (Cyanobacteria bacterium Yellowstone B-Prime).